The following is a 690-amino-acid chain: UvrABC system protein B (690 aa).

One can recognise a Helicase ATP-binding domain in the interval 30-188 (QGVMDGQTNQ…QELISLHFVR (159 aa)). Residue 43–50 (GVTGSGKT) coordinates ATP. A Beta-hairpin motif is present at residues 96-119 (YYDFYQPEAYIPTMDKYIAKDLKI). The Helicase C-terminal domain maps to 435–601 (QIDDLLEEIR…SIVKSVDQVL (167 aa)). The 36-residue stretch at 641–676 (YAMAEELRLEMQEAAESMEFEKAAYLRDEVTKLEDA) folds into the UVR domain.

It belongs to the UvrB family. As to quaternary structure, forms a heterotetramer with UvrA during the search for lesions. Interacts with UvrC in an incision complex.

Its subcellular location is the cytoplasm. The UvrABC repair system catalyzes the recognition and processing of DNA lesions. A damage recognition complex composed of 2 UvrA and 2 UvrB subunits scans DNA for abnormalities. Upon binding of the UvrA(2)B(2) complex to a putative damaged site, the DNA wraps around one UvrB monomer. DNA wrap is dependent on ATP binding by UvrB and probably causes local melting of the DNA helix, facilitating insertion of UvrB beta-hairpin between the DNA strands. Then UvrB probes one DNA strand for the presence of a lesion. If a lesion is found the UvrA subunits dissociate and the UvrB-DNA preincision complex is formed. This complex is subsequently bound by UvrC and the second UvrB is released. If no lesion is found, the DNA wraps around the other UvrB subunit that will check the other stand for damage. In Chlorobium phaeobacteroides (strain BS1), this protein is UvrABC system protein B.